The sequence spans 596 residues: Zinc finger E-box-binding homeobox protein zag-1 (596 aa).

Residues 24-46 form a C2H2-type 1 zinc finger; the sequence is FKCPECTKAFKFKHHLKEHIRIH. Residues 52 to 72 form a C2H2-type 2; degenerate zinc finger; that stretch reads FECQQCHKRFSHSGSYSSHMS. Polar residues predominate over residues 133–145; the sequence is LENGTSPTPTQEP. Disordered stretches follow at residues 133–225, 324–369, and 395–421; these read LENG…RPLR, NNSL…EPEW, and GFVT…GSSS. Residues 165–179 show a composition bias toward basic and acidic residues; that stretch reads SEVKTEVKTEVKTED. The segment covering 188 to 200 has biased composition (polar residues); it reads PAVSMSLSPAPEQ. Over residues 201–216 the composition is skewed to low complexity; the sequence is NGNESMNNGGSGSDGK. Residues 223–282 constitute a DNA-binding region (homeobox); the sequence is PLRSRSFLNDSQVAVLQNHFKRNPFPSKYELSAVAEQIGVNKRVVQVWFQNTRAKERRSN. Basic and acidic residues predominate over residues 331 to 355; sequence QDERNNENTDEVMDHDGLKDGKETP. 2 consecutive C2H2-type zinc fingers follow at residues 481–503 and 509–531; these read FSCD…KYEH and YKCD…KRLH. The C2H2-type 5; degenerate zinc-finger motif lies at 537 to 560; it reads FQCDKCLKRFSHSGSYSQHMNHRY. The tract at residues 569-596 is disordered; the sequence is QPASPSDVLNGGSVTVSPSSSNTPPPST. The span at 578–590 shows a compositional bias: low complexity; that stretch reads NGGSVTVSPSSSN.

In terms of tissue distribution, expressed in the six touch receptor neurons (TRNs) but not in the FLP and PVD neurons. Expressed in the M4 cholinergic motor neuron.

Its subcellular location is the nucleus. In terms of biological role, transcription factor. Down-regulates expression of genes involved in either the synthesis or reuptake of serotonin, dopamine and GABA. Acts as a transcriptional repressor to regulate multiple, discrete, neuron-specific aspects of terminal differentiation, including cell migration, axonal development and gene expression. Promotes touch receptor neuron differentiation by repressing the expression of egl-44 and egl-46. As egl-44 and egl-46, probably acting as a heterodimer, repress expression of zag-1 in FLP neurons, together these proteins form a bistable, negative-feedback loop that regulates the choice between neuronal fates. Required for axon guidance. Involved in the proper development of the pharynx. Required for pharynx isthmus peristalsis, probably via a role in the differentiation of the M4 cholinergic motor neuron. Directly represses its own transcription by interacting with conserved E-box sequence motifs 5'-CACCTG-3' in its own promoter. May also act as a transcriptional activator of the homeodomain ceh-28. This Caenorhabditis elegans protein is Zinc finger E-box-binding homeobox protein zag-1.